The chain runs to 282 residues: Undecaprenyl-diphosphatase (282 aa).

6 consecutive transmembrane segments (helical) span residues 90–110 (YWLG…GLVC), 121–141 (LWVV…AEYV), 165–185 (LALI…LFLG), 194–214 (FGFL…IPDA), 228–248 (QLLV…SWLL), and 256–276 (LYWF…LLAV).

It belongs to the UppP family.

The protein resides in the cell membrane. The catalysed reaction is di-trans,octa-cis-undecaprenyl diphosphate + H2O = di-trans,octa-cis-undecaprenyl phosphate + phosphate + H(+). Functionally, catalyzes the dephosphorylation of undecaprenyl diphosphate (UPP). Confers resistance to bacitracin. The polypeptide is Undecaprenyl-diphosphatase (Mycobacterium leprae (strain Br4923)).